The sequence spans 295 residues: Ethanolamine ammonia-lyase small subunit (295 aa).

Valine 208 and glutamate 229 together coordinate adenosylcob(III)alamin.

The protein belongs to the EutC family. As to quaternary structure, the basic unit is a heterodimer which dimerizes to form tetramers. The heterotetramers trimerize; 6 large subunits form a core ring with 6 small subunits projecting outwards. It depends on adenosylcob(III)alamin as a cofactor.

Its subcellular location is the bacterial microcompartment. It catalyses the reaction ethanolamine = acetaldehyde + NH4(+). Its pathway is amine and polyamine degradation; ethanolamine degradation. Its function is as follows. Catalyzes the deamination of various vicinal amino-alcohols to oxo compounds. Allows this organism to utilize ethanolamine as the sole source of nitrogen and carbon in the presence of external vitamin B12. The chain is Ethanolamine ammonia-lyase small subunit from Fusobacterium nucleatum subsp. nucleatum (strain ATCC 25586 / DSM 15643 / BCRC 10681 / CIP 101130 / JCM 8532 / KCTC 2640 / LMG 13131 / VPI 4355).